We begin with the raw amino-acid sequence, 187 residues long: Interferon beta (187 aa).

The first 21 residues, 1-21 (MTSRSLLPFVLSLLLPRIIMA), serve as a signal peptide directing secretion. Tyr24 bears the Phosphotyrosine mark. The cysteines at positions 53 and 162 are disulfide-linked. Asn76, Asn95, Asn132, and Asn158 each carry an N-linked (GlcNAc...) asparagine glycan.

This sequence belongs to the alpha/beta interferon family. In terms of assembly, monomer.

It localises to the secreted. Its function is as follows. Type I interferon cytokine that plays a key role in the innate immune response to infection, developing tumors and other inflammatory stimuli. Signals via binding to high-affinity (IFNAR2) and low-affinity (IFNAR1) heterodimeric receptor, activating the canonical Jak-STAT signaling pathway resulting in transcriptional activation or repression of interferon-regulated genes that encode the effectors of the interferon response, such as antiviral proteins, regulators of cell proliferation and differentiation, and immunoregulatory proteins. Signals mostly via binding to a IFNAR1-IFNAR2 heterodimeric receptor, but can also function with IFNAR1 alone and independently of Jak-STAT pathways. Elicits a wide variety of responses, including antiviral and antibacterial activities, and can regulate the development of B-cells, myelopoiesis and lipopolysaccharide (LPS)-inducible production of tumor necrosis factor. Plays a role in neuronal homeostasis by regulating dopamine turnover and protecting dopaminergic neurons: acts by promoting neuronal autophagy and alpha-synuclein clearance, thereby preventing dopaminergic neuron loss. IFNB1 is more potent than interferon-alpha (IFN-alpha) in inducing the apoptotic and antiproliferative pathways required for control of tumor cell growth. The sequence is that of Interferon beta (IFNB1) from Tachyglossus aculeatus aculeatus (Southeast Australian short-beaked echidna).